Reading from the N-terminus, the 87-residue chain is Phytosulfokines 2 (87 aa).

A signal peptide spans 1–22; it reads MANVSALLTIALLLCSTLMCTA. The propeptide occupies 23-77; sequence RPEPAISISITTAADPCNMEKKIEGKLDDMHMVDENCGADDEDCLMRRTLVAHTD. A sulfotyrosine mark is found at Tyr78 and Tyr80. Residues 83 to 87 constitute a propeptide that is removed on maturation; it reads KKKHP.

Belongs to the phytosulfokine family. In terms of processing, sulfation is important for activity and for the binding to a putative membrane receptor. PSK-beta is an enzymatic derivative of PSK-alpha. In terms of tissue distribution, expressed in stems, roots and leaves.

Its subcellular location is the secreted. Promotes plant cell differentiation, organogenesis and somatic embryogenesis as well as cell proliferation. In Arabidopsis thaliana (Mouse-ear cress), this protein is Phytosulfokines 2 (PSK2).